A 581-amino-acid polypeptide reads, in one-letter code: Neither inactivation nor afterpotential protein G (581 aa).

The signal sequence occupies residues 1–26 (MGMKFQKILVLAGIVIGFLSIIVVLA). Residue 48-77 (DYVIVGGGTGGSTLTSLLAKNSNGSVLLIE) participates in FAD binding. N70, N156, N404, and N464 each carry an N-linked (GlcNAc...) asparagine glycan. H516 functions as the Proton acceptor in the catalytic mechanism.

This sequence belongs to the GMC oxidoreductase family. FAD is required as a cofactor.

It localises to the secreted. Oxidoreductase involved in biosynthesis of 3-hydroxyretinal, a chromophore for rhodopsin Rh1. Not responsible for the initial hydroxylation of the retinal ring but rather acts in a subsequent step in chromophore production. May catalyze the conversion of (3R)-3-hydroxyretinol to the 3S enantiomer. This Drosophila melanogaster (Fruit fly) protein is Neither inactivation nor afterpotential protein G (ninaG).